The primary structure comprises 993 residues: P3N-PIPO polyprotein (993 aa).

One can recognise a Peptidase S30 domain in the interval 154 to 298; it reads GVTPYSVQQL…ESTMLSTHHY (145 aa). Residues His207, Asp216, and Ser249 each act as for P1 proteinase activity in the active site. The Involved in interaction with stylet and aphid transmission signature appears at 349-352; it reads KITC. Positions 607–609 match the Involved in virions binding and aphid transmission motif; sequence PTK. Positions 633 to 755 constitute a Peptidase C6 domain; the sequence is MYIAKSGYCY…DSEMKHYRVG (123 aa). Active-site for helper component proteinase activity residues include Cys641 and His714.

Belongs to the potyviridae P3N-PIPO polyprotein family. In terms of assembly, interacts (via PIPO domain) with host PCaP1 protein; this interaction may help to anchor the movement complex to the plasma membrane from which the complex could move to the plasmodesmata. Potyviral RNA is expressed as two polyproteins which undergo post-translational proteolytic processing. Genome polyprotein is processed by NIa-pro, P1 and HC-pro proteinases resulting in the production of at least ten individual proteins. P3N-PIPO is cleaved by P1 and HC-pro proteinases resulting in the production of three individual proteins. The P1 proteinase and the HC-pro cleave only their respective C-termini autocatalytically.

It is found in the host cell junction. The protein resides in the host plasmodesma. The catalysed reaction is Hydrolyzes a Gly-|-Gly bond at its own C-terminus, commonly in the sequence -Tyr-Xaa-Val-Gly-|-Gly, in the processing of the potyviral polyprotein.. In terms of biological role, required for aphid transmission and also has proteolytic activity. Only cleaves a Gly-Gly dipeptide at its own C-terminus. Interacts with virions and aphid stylets. Acts as a suppressor of RNA-mediated gene silencing, also known as post-transcriptional gene silencing (PTGS), a mechanism of plant viral defense that limits the accumulation of viral RNAs. May have RNA-binding activity. Functionally, allows efficient cell to cell propagation, by bypassing the host cell wall barrier. Transports viral genome to neighboring plant cells directly through plasmosdesmata, without any budding. The protein is P3N-PIPO polyprotein of Solanum betaceum (Tamarillo).